We begin with the raw amino-acid sequence, 233 residues long: uncharacterized protein (233 aa).

6 helical membrane-spanning segments follow: residues 7 to 27 (VPIF…LLAY), 36 to 56 (YEFE…ILIP), 62 to 82 (MFVL…KYLA), 119 to 139 (LIIA…AILM), 159 to 179 (PLYP…VGLV), and 188 to 208 (ILLA…APHI).

Its subcellular location is the cell membrane. This is an uncharacterized protein from Methanocaldococcus jannaschii (strain ATCC 43067 / DSM 2661 / JAL-1 / JCM 10045 / NBRC 100440) (Methanococcus jannaschii).